A 649-amino-acid chain; its full sequence is Arylsulfatase (649 aa).

Positions 1-22 are cleaved as a signal peptide; sequence MLQRLVVALCLLGFAALTAAAA. Asp-34 and Asp-35 together coordinate Ca(2+). The N-linked (GlcNAc...) asparagine glycan is linked to Asn-41. Cys-72 is a Ca(2+) binding site. Catalysis depends on Cys-72, which acts as the Nucleophile. Cys-72 is subject to 3-oxoalanine (Cys). 3 N-linked (GlcNAc...) asparagine glycosylation sites follow: Asn-89, Asn-224, and Asn-279. Ca(2+) contacts are provided by Asp-324 and Asn-325. N-linked (GlcNAc...) asparagine glycans are attached at residues Asn-445, Asn-489, and Asn-531.

This sequence belongs to the sulfatase family. It depends on Ca(2+) as a cofactor. The conversion to 3-oxoalanine (also known as C-formylglycine, FGly), of a serine or cysteine residue in prokaryotes and of a cysteine residue in eukaryotes, is critical for catalytic activity.

The protein resides in the periplasm. It catalyses the reaction an aryl sulfate + H2O = a phenol + sulfate + H(+). With respect to regulation, inhibited by Na(3)BO(3) and KCN. No inhibition by sodium dodecyl sulfate, even at high concentration. Its function is as follows. Is commonly produced by soil microorganisms and plays an important role in the mineralization of sulfates. The chain is Arylsulfatase from Volvox carteri (Green alga).